Reading from the N-terminus, the 514-residue chain is Peptide chain release factor 3 (514 aa).

Positions 8-268 (KKRRTFAIIS…TFLKFAPEPH (261 aa)) constitute a tr-type G domain. GTP is bound by residues 17-24 (SHPDAGKT), 85-89 (DTPGH), and 139-142 (NKLD).

It belongs to the TRAFAC class translation factor GTPase superfamily. Classic translation factor GTPase family. PrfC subfamily.

Its subcellular location is the cytoplasm. Increases the formation of ribosomal termination complexes and stimulates activities of RF-1 and RF-2. It binds guanine nucleotides and has strong preference for UGA stop codons. It may interact directly with the ribosome. The stimulation of RF-1 and RF-2 is significantly reduced by GTP and GDP, but not by GMP. This chain is Peptide chain release factor 3, found in Streptococcus sanguinis (strain SK36).